A 513-amino-acid chain; its full sequence is Maturase K (513 aa).

The protein belongs to the intron maturase 2 family. MatK subfamily.

The protein resides in the plastid. It is found in the chloroplast. In terms of biological role, usually encoded in the trnK tRNA gene intron. Probably assists in splicing its own and other chloroplast group II introns. In Phaseolus vulgaris (Kidney bean), this protein is Maturase K.